The following is a 340-amino-acid chain: Protein RecA (340 aa).

66–73 (GPESSGKT) contacts ATP.

It belongs to the RecA family.

It is found in the cytoplasm. Can catalyze the hydrolysis of ATP in the presence of single-stranded DNA, the ATP-dependent uptake of single-stranded DNA by duplex DNA, and the ATP-dependent hybridization of homologous single-stranded DNAs. It interacts with LexA causing its activation and leading to its autocatalytic cleavage. The polypeptide is Protein RecA (Rickettsia prowazekii (strain Madrid E)).